The chain runs to 148 residues: Large ribosomal subunit protein uL22 (148 aa).

Belongs to the universal ribosomal protein uL22 family. In terms of assembly, part of the 50S ribosomal subunit.

Functionally, this protein binds specifically to 23S rRNA. It makes multiple contacts with different domains of the 23S rRNA in the assembled 50S subunit and ribosome. The globular domain of the protein is located near the polypeptide exit tunnel on the outside of the subunit, while an extended beta-hairpin is found that lines the wall of the exit tunnel in the center of the 70S ribosome. This chain is Large ribosomal subunit protein uL22, found in Thermoplasma volcanium (strain ATCC 51530 / DSM 4299 / JCM 9571 / NBRC 15438 / GSS1).